Here is a 923-residue protein sequence, read N- to C-terminus: Protocadherin gamma-B5 (923 aa).

The N-terminal stretch at 1–30 (MGSGAGELGRAERLPVLFLFLLSLFCPALC) is a signal peptide. Cadherin domains are found at residues 31-133 (EQIR…TPKF), 134-242 (TQNS…PPVF), 243-343 (NRDV…SPEV), 344-448 (TFHS…APVF), 449-558 (HQAS…APRV), and 566-671 (DGSA…LPDI). Residues 31 to 687 (EQIRYRIPEE…SDPQAELQFY (657 aa)) lie on the Extracellular side of the membrane. Residues Asn415 and Asn541 are each glycosylated (N-linked (GlcNAc...) asparagine). Residues 688–708 (LVVALALISVLFLLAVILAVA) form a helical membrane-spanning segment. Residues 709–923 (LRLRRSSSPA…KKKSGKKEKK (215 aa)) are Cytoplasmic-facing. 2 disordered regions span residues 794–832 (TSHP…WPNN) and 893–923 (ATLT…KEKK). Over residues 807-832 (WRFSQAQRPGTSGSQNGDDTGTWPNN) the composition is skewed to polar residues. Residues 913 to 923 (NKKKSGKKEKK) show a composition bias toward basic residues.

The protein localises to the cell membrane. Functionally, potential calcium-dependent cell-adhesion protein. May be involved in the establishment and maintenance of specific neuronal connections in the brain. The protein is Protocadherin gamma-B5 (PCDHGB5) of Homo sapiens (Human).